The following is a 240-amino-acid chain: ATP-dependent dethiobiotin synthetase BioD 1 (240 aa).

13–18 (DVGKTV) contributes to the ATP binding site. Residue Thr-17 coordinates Mg(2+). The active site involves Lys-38. Ser-42 is a binding site for substrate. ATP is bound by residues Asp-55, 116-119 (EGAG), 176-177 (NE), 205-207 (PYL), and Glu-212. The Mg(2+) site is built by Asp-55 and Glu-116.

The protein belongs to the dethiobiotin synthetase family. As to quaternary structure, homodimer. The cofactor is Mg(2+).

It localises to the cytoplasm. The catalysed reaction is (7R,8S)-7,8-diammoniononanoate + CO2 + ATP = (4R,5S)-dethiobiotin + ADP + phosphate + 3 H(+). It functions in the pathway cofactor biosynthesis; biotin biosynthesis; biotin from 7,8-diaminononanoate: step 1/2. Catalyzes a mechanistically unusual reaction, the ATP-dependent insertion of CO2 between the N7 and N8 nitrogen atoms of 7,8-diaminopelargonic acid (DAPA, also called 7,8-diammoniononanoate) to form a ureido ring. The protein is ATP-dependent dethiobiotin synthetase BioD 1 of Yersinia pestis.